The chain runs to 388 residues: Succinyl-diaminopimelate desuccinylase (388 aa).

Zn(2+) is bound at residue His-84. Residue Asp-86 is part of the active site. Asp-115 is a binding site for Zn(2+). The active-site Proton acceptor is the Glu-146. Zn(2+)-binding residues include Glu-147, Glu-175, and His-360.

The protein belongs to the peptidase M20A family. DapE subfamily. Homodimer. Zn(2+) serves as cofactor. It depends on Co(2+) as a cofactor.

The catalysed reaction is N-succinyl-(2S,6S)-2,6-diaminopimelate + H2O = (2S,6S)-2,6-diaminopimelate + succinate. It participates in amino-acid biosynthesis; L-lysine biosynthesis via DAP pathway; LL-2,6-diaminopimelate from (S)-tetrahydrodipicolinate (succinylase route): step 3/3. Functionally, catalyzes the hydrolysis of N-succinyl-L,L-diaminopimelic acid (SDAP), forming succinate and LL-2,6-diaminopimelate (DAP), an intermediate involved in the bacterial biosynthesis of lysine and meso-diaminopimelic acid, an essential component of bacterial cell walls. The sequence is that of Succinyl-diaminopimelate desuccinylase from Helicobacter pylori (strain J99 / ATCC 700824) (Campylobacter pylori J99).